The following is a 78-amino-acid chain: Exodeoxyribonuclease 7 small subunit (78 aa).

The protein belongs to the XseB family. As to quaternary structure, heterooligomer composed of large and small subunits.

The protein resides in the cytoplasm. It carries out the reaction Exonucleolytic cleavage in either 5'- to 3'- or 3'- to 5'-direction to yield nucleoside 5'-phosphates.. Its function is as follows. Bidirectionally degrades single-stranded DNA into large acid-insoluble oligonucleotides, which are then degraded further into small acid-soluble oligonucleotides. The sequence is that of Exodeoxyribonuclease 7 small subunit from Psychromonas ingrahamii (strain DSM 17664 / CCUG 51855 / 37).